The following is a 448-amino-acid chain: Putative RNA-ligase (448 aa).

The protein belongs to the asfivirus M448R family.

It is found in the virion. This is Putative RNA-ligase from African swine fever virus (isolate Pig/Kenya/KEN-50/1950) (ASFV).